A 215-amino-acid polypeptide reads, in one-letter code: Beta-crystallin A3-1 (215 aa).

Positions 1–30 (MEIPVDQTEREDITSEKMAQINPLPVHLGP) are N-terminal arm. Beta/gamma crystallin 'Greek key' domains lie at 31-70 (WKITVYDQENFQGKRMEFTSSCANIMECGFDNIRSLKVEC) and 71-117 (GAWI…RPIC). Positions 118 to 123 (SANHIE) are connecting peptide. Beta/gamma crystallin 'Greek key' domains are found at residues 124–165 (SKLV…KVQC) and 166–214 (GAWV…RRIQ).

This sequence belongs to the beta/gamma-crystallin family. In terms of assembly, homo/heterodimer, or complexes of higher-order. The structure of beta-crystallin oligomers seems to be stabilized through interactions between the N-terminal arms. Post-translationally, the N-terminus is blocked.

In terms of biological role, crystallins are the dominant structural components of the vertebrate eye lens. The polypeptide is Beta-crystallin A3-1 (Aquarana catesbeiana (American bullfrog)).